The chain runs to 115 residues: Glycine cleavage system H-like protein (115 aa).

The 83-residue stretch at 17–99 (VVRLGLTEKM…EGEGWLAVVR (83 aa)) folds into the Lipoyl-binding domain. Lys-58 is modified (N6-lipoyllysine).

The protein belongs to the GcvH family. (R)-lipoate is required as a cofactor.

This chain is Glycine cleavage system H-like protein, found in Chlamydia pneumoniae (Chlamydophila pneumoniae).